The primary structure comprises 338 residues: uncharacterized protein (338 aa).

The signal sequence occupies residues 1–29 (MIKQLYKNITICSLTISTALTVFPATSYA).

It belongs to the aerolysin family.

This is an uncharacterized protein from Staphylococcus aureus (strain bovine RF122 / ET3-1).